The primary structure comprises 222 residues: Large ribosomal subunit protein bL25 (222 aa).

It belongs to the bacterial ribosomal protein bL25 family. CTC subfamily. Part of the 50S ribosomal subunit; part of the 5S rRNA/L5/L18/L25 subcomplex. Contacts the 5S rRNA. Binds to the 5S rRNA independently of L5 and L18.

Its function is as follows. This is one of the proteins that binds to the 5S RNA in the ribosome where it forms part of the central protuberance. The chain is Large ribosomal subunit protein bL25 from Ruthia magnifica subsp. Calyptogena magnifica.